The sequence spans 237 residues: Ribosomal RNA small subunit methyltransferase G (237 aa).

The segment at 1–25 is disordered; the sequence is MASRHSPQTAAQPDAADKAQALRLT. Low complexity predominate over residues 7 to 21; it reads PQTAAQPDAADKAQA. Residues Gly-85, Phe-90, and Arg-155 each contribute to the S-adenosyl-L-methionine site.

The protein belongs to the methyltransferase superfamily. RNA methyltransferase RsmG family.

Its subcellular location is the cytoplasm. The catalysed reaction is guanosine(527) in 16S rRNA + S-adenosyl-L-methionine = N(7)-methylguanosine(527) in 16S rRNA + S-adenosyl-L-homocysteine. Functionally, specifically methylates the N7 position of guanine in position 527 of 16S rRNA. This is Ribosomal RNA small subunit methyltransferase G from Rhodopseudomonas palustris (strain HaA2).